Here is a 555-residue protein sequence, read N- to C-terminus: Dihydroxy-acid dehydratase (555 aa).

Cysteine 46 contributes to the [2Fe-2S] cluster binding site. Aspartate 78 provides a ligand contact to Mg(2+). A [2Fe-2S] cluster-binding site is contributed by cysteine 119. Mg(2+)-binding residues include aspartate 120 and lysine 121. Residue lysine 121 is modified to N6-carboxylysine. Residue cysteine 191 coordinates [2Fe-2S] cluster. Glutamate 442 contacts Mg(2+). Serine 468 functions as the Proton acceptor in the catalytic mechanism.

The protein belongs to the IlvD/Edd family. As to quaternary structure, homodimer. The cofactor is [2Fe-2S] cluster. Mg(2+) serves as cofactor.

It carries out the reaction (2R)-2,3-dihydroxy-3-methylbutanoate = 3-methyl-2-oxobutanoate + H2O. The catalysed reaction is (2R,3R)-2,3-dihydroxy-3-methylpentanoate = (S)-3-methyl-2-oxopentanoate + H2O. The protein operates within amino-acid biosynthesis; L-isoleucine biosynthesis; L-isoleucine from 2-oxobutanoate: step 3/4. It participates in amino-acid biosynthesis; L-valine biosynthesis; L-valine from pyruvate: step 3/4. Functions in the biosynthesis of branched-chain amino acids. Catalyzes the dehydration of (2R,3R)-2,3-dihydroxy-3-methylpentanoate (2,3-dihydroxy-3-methylvalerate) into 2-oxo-3-methylpentanoate (2-oxo-3-methylvalerate) and of (2R)-2,3-dihydroxy-3-methylbutanoate (2,3-dihydroxyisovalerate) into 2-oxo-3-methylbutanoate (2-oxoisovalerate), the penultimate precursor to L-isoleucine and L-valine, respectively. The polypeptide is Dihydroxy-acid dehydratase (Thermus thermophilus (strain ATCC 27634 / DSM 579 / HB8)).